The chain runs to 464 residues: Arginine biosynthesis bifunctional protein ArgJ, mitochondrial (464 aa).

The N-terminal 22 residues, 1 to 22 (MAASFKALPQQLTLTRSFARCY), are a transit peptide targeting the mitochondrion. 6 residues coordinate substrate: Thr-193, Lys-222, Thr-233, Glu-320, Asn-459, and Thr-464. Thr-233 functions as the Nucleophile in the catalytic mechanism.

This sequence belongs to the ArgJ family. As to quaternary structure, heterodimer of an alpha and a beta chain. Post-translationally, the alpha and beta chains are autoproteolytically processed from a single precursor protein within the mitochondrion.

Its subcellular location is the mitochondrion matrix. It carries out the reaction N(2)-acetyl-L-ornithine + L-glutamate = N-acetyl-L-glutamate + L-ornithine. It catalyses the reaction L-glutamate + acetyl-CoA = N-acetyl-L-glutamate + CoA + H(+). Its pathway is amino-acid biosynthesis; L-arginine biosynthesis; L-ornithine and N-acetyl-L-glutamate from L-glutamate and N(2)-acetyl-L-ornithine (cyclic): step 1/1. It functions in the pathway amino-acid biosynthesis; L-arginine biosynthesis; N(2)-acetyl-L-ornithine from L-glutamate: step 1/4. Its function is as follows. Catalyzes two activities which are involved in the cyclic version of arginine biosynthesis: the synthesis of acetylglutamate from glutamate and acetyl-CoA, and of ornithine by transacetylation between acetylornithine and glutamate. This Verticillium alfalfae (strain VaMs.102 / ATCC MYA-4576 / FGSC 10136) (Verticillium wilt of alfalfa) protein is Arginine biosynthesis bifunctional protein ArgJ, mitochondrial.